The chain runs to 278 residues: Release factor glutamine methyltransferase (278 aa).

Residues 117 to 121 (GTGSG), aspartate 140, and asparagine 184 each bind S-adenosyl-L-methionine. 184 to 187 (NPPY) provides a ligand contact to substrate.

It belongs to the protein N5-glutamine methyltransferase family. PrmC subfamily.

The catalysed reaction is L-glutaminyl-[peptide chain release factor] + S-adenosyl-L-methionine = N(5)-methyl-L-glutaminyl-[peptide chain release factor] + S-adenosyl-L-homocysteine + H(+). In terms of biological role, methylates the class 1 translation termination release factors RF1/PrfA and RF2/PrfB on the glutamine residue of the universally conserved GGQ motif. This is Release factor glutamine methyltransferase from Bacteroides thetaiotaomicron (strain ATCC 29148 / DSM 2079 / JCM 5827 / CCUG 10774 / NCTC 10582 / VPI-5482 / E50).